A 135-amino-acid chain; its full sequence is Photosystem II extrinsic protein V (135 aa).

Residues Cys-37, Cys-40, His-41, and His-92 each coordinate heme c.

Belongs to the cytochrome c family. PsbV subfamily. PSII is composed of 1 copy each of membrane proteins PsbA, PsbB, PsbC, PsbD, PsbE, PsbF, PsbH, PsbI, PsbJ, PsbK, PsbL, PsbM, PsbT, PsbX, PsbY, PsbZ, Psb30/Ycf12, peripheral proteins PsbO, CyanoQ (PsbQ), PsbU, PsbV and a large number of cofactors. It forms dimeric complexes. The cofactor is heme c.

The protein localises to the cellular thylakoid membrane. Functionally, one of the extrinsic, lumenal subunits of photosystem II (PSII). PSII is a light-driven water plastoquinone oxidoreductase, using light energy to abstract electrons from H(2)O, generating a proton gradient subsequently used for ATP formation. The extrinsic proteins stabilize the structure of photosystem II oxygen-evolving complex (OEC), the ion environment of oxygen evolution and protect the OEC against heat-induced inactivation. Low-potential cytochrome c that plays a role in the OEC of PSII. The sequence is that of Photosystem II extrinsic protein V from Microcystis aeruginosa.